We begin with the raw amino-acid sequence, 241 residues long: tRNA (guanine-N(7)-)-methyltransferase (241 aa).

S-adenosyl-L-methionine-binding residues include Gly-61, Glu-84, Arg-86, Asn-117, Ala-118, and Leu-137. The active site involves Asp-140. The interval 141-149 (PHFKKTKHK) is alphaC helix. S-adenosyl-L-methionine contacts are provided by Thr-215 and Glu-217. Residues 215 to 223 (TEEGKKVQR) form an alpha6 helix region.

This sequence belongs to the class I-like SAM-binding methyltransferase superfamily. TrmB family. In terms of assembly, catalytic component of the METTL1-WDR4 complex, composed of mettl1 and wdr4.

The protein resides in the nucleus. It catalyses the reaction guanosine(46) in tRNA + S-adenosyl-L-methionine = N(7)-methylguanosine(46) in tRNA + S-adenosyl-L-homocysteine. The enzyme catalyses a guanosine in mRNA + S-adenosyl-L-methionine = an N(7)-methylguanosine in mRNA + S-adenosyl-L-homocysteine. The catalysed reaction is a guanosine in miRNA + S-adenosyl-L-methionine = an N(7)-methylguanosine in miRNA + S-adenosyl-L-homocysteine. The protein operates within tRNA modification; N(7)-methylguanine-tRNA biosynthesis. Functionally, catalytic component of METTL1-WDR4 methyltransferase complex that mediates the formation of N(7)-methylguanine in a subset of RNA species, such as tRNAs, mRNAs and microRNAs (miRNAs). Catalyzes the formation of N(7)-methylguanine at position 46 (m7G46) in a large subset of tRNAs that contain the 5'-RAGGU-3' motif within the variable loop. M7G46 interacts with C13-G22 in the D-loop to stabilize tRNA tertiary structure and protect tRNAs from decay. Also acts as a methyltransferase for a subset of internal N(7)-methylguanine in mRNAs. Internal N(7)-methylguanine methylation of mRNAs in response to stress promotes their relocalization to stress granules, thereby suppressing their translation. Also methylates a specific subset of miRNAs. This Danio rerio (Zebrafish) protein is tRNA (guanine-N(7)-)-methyltransferase (mettl1).